The primary structure comprises 142 residues: UPF0306 protein Ent638_3591 (142 aa).

Belongs to the UPF0306 family.

The sequence is that of UPF0306 protein Ent638_3591 from Enterobacter sp. (strain 638).